A 248-amino-acid chain; its full sequence is tRNA pseudouridine synthase A 2 (248 aa).

Asp-55 acts as the Nucleophile in catalysis. Tyr-113 lines the substrate pocket.

This sequence belongs to the tRNA pseudouridine synthase TruA family. Homodimer.

It carries out the reaction uridine(38/39/40) in tRNA = pseudouridine(38/39/40) in tRNA. In terms of biological role, formation of pseudouridine at positions 38, 39 and 40 in the anticodon stem and loop of transfer RNAs. This chain is tRNA pseudouridine synthase A 2, found in Clostridium tetani (strain Massachusetts / E88).